A 231-amino-acid polypeptide reads, in one-letter code: NADH-ubiquinone oxidoreductase chain 4 (231 aa).

Helical transmembrane passes span 1 to 21 (PIAG…YGII), 34 to 54 (MFLP…LTCL), 63 to 85 (IAYS…TPWG), 89 to 111 (AMTL…NTTY), 128 to 148 (ILPM…AIPP), and 156 to 176 (LLIM…LGLS).

This sequence belongs to the complex I subunit 4 family.

It is found in the mitochondrion membrane. It carries out the reaction a ubiquinone + NADH + 5 H(+)(in) = a ubiquinol + NAD(+) + 4 H(+)(out). In terms of biological role, core subunit of the mitochondrial membrane respiratory chain NADH dehydrogenase (Complex I) that is believed to belong to the minimal assembly required for catalysis. Complex I functions in the transfer of electrons from NADH to the respiratory chain. The immediate electron acceptor for the enzyme is believed to be ubiquinone. This is NADH-ubiquinone oxidoreductase chain 4 (MT-ND4) from Gloydius intermedius (Central Asian pit viper).